The following is a 410-amino-acid chain: Aspartate aminotransferase (410 aa).

Residues glycine 47, tryptophan 135, and asparagine 185 each contribute to the L-aspartate site. Lysine 249 bears the N6-(pyridoxal phosphate)lysine mark. Residue arginine 385 coordinates L-aspartate.

This sequence belongs to the class-I pyridoxal-phosphate-dependent aminotransferase family. In terms of assembly, homodimer. Requires pyridoxal 5'-phosphate as cofactor.

The protein resides in the cytoplasm. The enzyme catalyses L-aspartate + 2-oxoglutarate = oxaloacetate + L-glutamate. In terms of biological role, catalyzes the reversible conversion of aspartate and 2-oxoglutarate to glutamate and oxaloacetate. This is Aspartate aminotransferase from Rhizobium meliloti (Ensifer meliloti).